A 602-amino-acid polypeptide reads, in one-letter code: ATP-dependent DNA helicase XPD (602 aa).

Positions 1-247 (MQKSYGVALE…DLIEMIRSAL (247 aa)) constitute a Helicase ATP-binding domain. 11 to 18 (SPTGSGKT) is a binding site for ATP. Cysteine 74, cysteine 95, cysteine 110, and cysteine 146 together coordinate [4Fe-4S] cluster. Residues 193 to 196 (DEAH) carry the DEAH box motif. The Helicase C-terminal domain maps to 421–602 (VIEDIILKVK…SAQAREKYGA (182 aa)). The ssDNA site is built by tryptophan 531 and arginine 566.

Belongs to the helicase family. RAD3/XPD subfamily. Monomer. The cofactor is [4Fe-4S] cluster.

The enzyme catalyses Couples ATP hydrolysis with the unwinding of duplex DNA at the replication fork by translocating in the 5'-3' direction. This creates two antiparallel DNA single strands (ssDNA). The leading ssDNA polymer is the template for DNA polymerase III holoenzyme which synthesizes a continuous strand.. It catalyses the reaction ATP + H2O = ADP + phosphate + H(+). Functionally, ATP-dependent 5'-3' DNA helicase. Thought to be involved in nucleotide excision repair (NER) of DNA. The sequence is that of ATP-dependent DNA helicase XPD from Thermoplasma acidophilum (strain ATCC 25905 / DSM 1728 / JCM 9062 / NBRC 15155 / AMRC-C165).